The chain runs to 340 residues: Protein-arginine kinase (340 aa).

The 222-residue stretch at 21–242 (VVLSSRIRLA…EQIIMQERVA (222 aa)) folds into the Phosphagen kinase C-terminal domain. Residues 24-28 (SSRIR), histidine 79, arginine 113, 164-168 (RASVM), and 195-200 (RGIYGE) contribute to the ATP site.

This sequence belongs to the ATP:guanido phosphotransferase family.

The enzyme catalyses L-arginyl-[protein] + ATP = N(omega)-phospho-L-arginyl-[protein] + ADP + H(+). Functionally, catalyzes the specific phosphorylation of arginine residues in proteins. The sequence is that of Protein-arginine kinase from Listeria monocytogenes serotype 4b (strain CLIP80459).